We begin with the raw amino-acid sequence, 312 residues long: Methionyl-tRNA formyltransferase (312 aa).

111 to 114 (SLLP) provides a ligand contact to (6S)-5,6,7,8-tetrahydrofolate.

It belongs to the Fmt family.

The enzyme catalyses L-methionyl-tRNA(fMet) + (6R)-10-formyltetrahydrofolate = N-formyl-L-methionyl-tRNA(fMet) + (6S)-5,6,7,8-tetrahydrofolate + H(+). Attaches a formyl group to the free amino group of methionyl-tRNA(fMet). The formyl group appears to play a dual role in the initiator identity of N-formylmethionyl-tRNA by promoting its recognition by IF2 and preventing the misappropriation of this tRNA by the elongation apparatus. The protein is Methionyl-tRNA formyltransferase of Rhodopseudomonas palustris (strain HaA2).